The following is a 338-amino-acid chain: Anthranilate phosphoribosyltransferase (338 aa).

5-phospho-alpha-D-ribose 1-diphosphate contacts are provided by residues G81, 84–85 (GD), T89, 91–94 (NIST), 109–117 (KHGNRAQSS), and T121. Position 81 (G81) interacts with anthranilate. S93 is a binding site for Mg(2+). Residue N112 participates in anthranilate binding. R167 is a binding site for anthranilate. Positions 225 and 226 each coordinate Mg(2+).

Belongs to the anthranilate phosphoribosyltransferase family. As to quaternary structure, homodimer. The cofactor is Mg(2+).

The enzyme catalyses N-(5-phospho-beta-D-ribosyl)anthranilate + diphosphate = 5-phospho-alpha-D-ribose 1-diphosphate + anthranilate. Its pathway is amino-acid biosynthesis; L-tryptophan biosynthesis; L-tryptophan from chorismate: step 2/5. Catalyzes the transfer of the phosphoribosyl group of 5-phosphorylribose-1-pyrophosphate (PRPP) to anthranilate to yield N-(5'-phosphoribosyl)-anthranilate (PRA). The protein is Anthranilate phosphoribosyltransferase of Rhizobium rhizogenes (strain K84 / ATCC BAA-868) (Agrobacterium radiobacter).